The sequence spans 418 residues: L-rhamnose isomerase (418 aa).

3 residues coordinate Mn(2+): His261, Asp293, and Asp295.

Belongs to the rhamnose isomerase family. Mn(2+) serves as cofactor.

The protein resides in the cytoplasm. It catalyses the reaction L-rhamnopyranose = L-rhamnulose. Its pathway is carbohydrate degradation; L-rhamnose degradation; glycerone phosphate from L-rhamnose: step 1/3. In terms of biological role, catalyzes the interconversion of L-rhamnose and L-rhamnulose. The sequence is that of L-rhamnose isomerase from Clostridium beijerinckii (strain ATCC 51743 / NCIMB 8052) (Clostridium acetobutylicum).